We begin with the raw amino-acid sequence, 161 residues long: tRNA-specific adenosine deaminase (161 aa).

The region spanning 2–120 (TQDELYMKEA…GTLMNLLQEE (119 aa)) is the CMP/dCMP-type deaminase domain. H53 contacts Zn(2+). E55 functions as the Proton donor in the catalytic mechanism. Positions 83 and 86 each coordinate Zn(2+).

It belongs to the cytidine and deoxycytidylate deaminase family. As to quaternary structure, homodimer. Zn(2+) is required as a cofactor.

It carries out the reaction adenosine(34) in tRNA + H2O + H(+) = inosine(34) in tRNA + NH4(+). In terms of biological role, catalyzes the deamination of adenosine to inosine at the wobble position 34 of tRNA(Arg2). The sequence is that of tRNA-specific adenosine deaminase from Bacillus subtilis (strain 168).